The following is a 477-amino-acid chain: UDP-N-acetylmuramate--L-alanine ligase (477 aa).

112-118 (GAHGKTT) serves as a coordination point for ATP.

The protein belongs to the MurCDEF family.

The protein resides in the cytoplasm. The enzyme catalyses UDP-N-acetyl-alpha-D-muramate + L-alanine + ATP = UDP-N-acetyl-alpha-D-muramoyl-L-alanine + ADP + phosphate + H(+). It functions in the pathway cell wall biogenesis; peptidoglycan biosynthesis. In terms of biological role, cell wall formation. This Acidovorax ebreus (strain TPSY) (Diaphorobacter sp. (strain TPSY)) protein is UDP-N-acetylmuramate--L-alanine ligase.